A 613-amino-acid polypeptide reads, in one-letter code: Phosphomethylpyrimidine synthase (613 aa).

Substrate is bound by residues N215, M244, Y273, H309, 329 to 331, 370 to 373, and E409; these read SRG and DGLR. H413 is a binding site for Zn(2+). Y436 contributes to the substrate binding site. H477 is a Zn(2+) binding site. Residues C557, C560, and C565 each contribute to the [4Fe-4S] cluster site.

The protein belongs to the ThiC family. In terms of assembly, homodimer. [4Fe-4S] cluster serves as cofactor.

The catalysed reaction is 5-amino-1-(5-phospho-beta-D-ribosyl)imidazole + S-adenosyl-L-methionine = 4-amino-2-methyl-5-(phosphooxymethyl)pyrimidine + CO + 5'-deoxyadenosine + formate + L-methionine + 3 H(+). It functions in the pathway cofactor biosynthesis; thiamine diphosphate biosynthesis. Its function is as follows. Catalyzes the synthesis of the hydroxymethylpyrimidine phosphate (HMP-P) moiety of thiamine from aminoimidazole ribotide (AIR) in a radical S-adenosyl-L-methionine (SAM)-dependent reaction. The polypeptide is Phosphomethylpyrimidine synthase (Paramagnetospirillum magneticum (strain ATCC 700264 / AMB-1) (Magnetospirillum magneticum)).